The sequence spans 145 residues: Oleosin L (145 aa).

An N-acetylalanine modification is found at Ala-2. 2 helical membrane passes run 36 to 56 (GSLL…LTIA) and 59 to 79 (LLVI…LLGA). Positions 58–69 (PLLVIFSPVLVP) match the Proline-knot motif. Over residues 123–132 (KAREMKDRAE) the composition is skewed to basic and acidic residues. Residues 123-145 (KAREMKDRAEQFSQQPVAGSQTS) form a disordered region. Residues 133–145 (QFSQQPVAGSQTS) are compositionally biased toward polar residues.

It belongs to the oleosin family. As to expression, expressed in seeds (at protein level).

The protein resides in the lipid droplet. It is found in the membrane. May have a structural role to stabilize the lipid body during desiccation of the seed by preventing coalescence of the oil. Probably interacts with both lipid and phospholipid moieties of lipid bodies. May also provide recognition signals for specific lipase anchorage in lipolysis during seedling growth. This chain is Oleosin L, found in Sesamum indicum (Oriental sesame).